A 156-amino-acid chain; its full sequence is Probable cyclic pyranopterin monophosphate synthase (156 aa).

Residues 73–75 (MCH) and 109–110 (ME) each bind substrate. The active site involves aspartate 124.

It belongs to the MoaC family. Homohexamer; trimer of dimers.

It catalyses the reaction (8S)-3',8-cyclo-7,8-dihydroguanosine 5'-triphosphate = cyclic pyranopterin phosphate + diphosphate. Its pathway is cofactor biosynthesis; molybdopterin biosynthesis. Catalyzes the conversion of (8S)-3',8-cyclo-7,8-dihydroguanosine 5'-triphosphate to cyclic pyranopterin monophosphate (cPMP). This Archaeoglobus fulgidus (strain ATCC 49558 / DSM 4304 / JCM 9628 / NBRC 100126 / VC-16) protein is Probable cyclic pyranopterin monophosphate synthase.